The sequence spans 32 residues: Parigidin-br1 (32 aa).

The segment at residues 1-32 (GGSVPCGESCVFIPCITSLAGCSCKNKVCYYD) is a cross-link (cyclopeptide (Gly-Asp)). Cystine bridges form between C6/C22, C10/C24, and C15/C29.

Post-translationally, this is a cyclic peptide. As to expression, expressed in leaves, flowers, peduncles and seeds (at protein level).

Probably participates in a plant defense mechanism. Reduces growth of and increases mortality in larvae of D.saccharalis. Kills cultured SF-9 cells of S.frugiperda probably by disrupting plasma membranes. Has hemolytic activity against human erythrocytes. Has no antibacterial activity against E.coli strain ATCC 8739 and S.aureus strain ATCC 25923. In Palicourea rigida, this protein is Parigidin-br1.